The primary structure comprises 684 residues: Methionine--tRNA ligase (684 aa).

The short motif at 14–24 (PYANGAIHLGH) is the 'HIGH' region element. Zn(2+) contacts are provided by Cys145, Cys148, Cys158, and Cys161. Positions 330–334 (KMSKS) match the 'KMSKS' region motif. Lys333 is an ATP binding site. The tRNA-binding domain occupies 582–684 (DFAKLDLRVA…CGIRPGMQVK (103 aa)).

Belongs to the class-I aminoacyl-tRNA synthetase family. MetG type 1 subfamily. Homodimer. Zn(2+) is required as a cofactor.

The protein resides in the cytoplasm. The enzyme catalyses tRNA(Met) + L-methionine + ATP = L-methionyl-tRNA(Met) + AMP + diphosphate. Is required not only for elongation of protein synthesis but also for the initiation of all mRNA translation through initiator tRNA(fMet) aminoacylation. The protein is Methionine--tRNA ligase of Haemophilus ducreyi (strain 35000HP / ATCC 700724).